Here is a 314-residue protein sequence, read N- to C-terminus: Nodulation protein D 1 (314 aa).

The HTH lysR-type domain maps to 6–63; it reads LDLNLLVALDAVMTARNLTAAARKINLSQPAMSAAIARLRTYFRDELFTMRGRELVPT. Residues 23 to 42 constitute a DNA-binding region (H-T-H motif); sequence LTAAARKINLSQPAMSAAIA.

The protein belongs to the LysR transcriptional regulatory family.

Functionally, nodD regulates the expression of the nodABCFE genes which encode other nodulation proteins. NodD is also a negative regulator of its own expression. Binds flavonoids as inducers. This chain is Nodulation protein D 1 (nodD1), found in Bradyrhizobium diazoefficiens (strain JCM 10833 / BCRC 13528 / IAM 13628 / NBRC 14792 / USDA 110).